Here is a 253-residue protein sequence, read N- to C-terminus: Non-homologous end joining protein Ku (253 aa).

Residues 9–192 (ISFGLVNIPV…EITEEELELA (184 aa)) enclose the Ku domain.

It belongs to the prokaryotic Ku family. In terms of assembly, homodimer. Interacts with LigD.

Functionally, with LigD forms a non-homologous end joining (NHEJ) DNA repair enzyme, which repairs dsDNA breaks with reduced fidelity. Binds linear dsDNA with 5'- and 3'- overhangs but not closed circular dsDNA nor ssDNA. Recruits and stimulates the ligase activity of LigD. The protein is Non-homologous end joining protein Ku of Archaeoglobus fulgidus (strain ATCC 49558 / DSM 4304 / JCM 9628 / NBRC 100126 / VC-16).